Here is a 157-residue protein sequence, read N- to C-terminus: Protein-export protein SecB (157 aa).

This sequence belongs to the SecB family. As to quaternary structure, homotetramer, a dimer of dimers. One homotetramer interacts with 1 SecA dimer.

It localises to the cytoplasm. Functionally, one of the proteins required for the normal export of preproteins out of the cell cytoplasm. It is a molecular chaperone that binds to a subset of precursor proteins, maintaining them in a translocation-competent state. It also specifically binds to its receptor SecA. This Alcanivorax borkumensis (strain ATCC 700651 / DSM 11573 / NCIMB 13689 / SK2) protein is Protein-export protein SecB.